A 172-amino-acid polypeptide reads, in one-letter code: Shikimate kinase (172 aa).

Residue 11-16 coordinates ATP; the sequence is GAGKST. Serine 15 provides a ligand contact to Mg(2+). Substrate contacts are provided by aspartate 33, arginine 57, and glycine 79. Arginine 117 lines the ATP pocket. Arginine 136 contacts substrate. Arginine 153 is a binding site for ATP.

This sequence belongs to the shikimate kinase family. As to quaternary structure, monomer. Mg(2+) serves as cofactor.

It is found in the cytoplasm. It carries out the reaction shikimate + ATP = 3-phosphoshikimate + ADP + H(+). It participates in metabolic intermediate biosynthesis; chorismate biosynthesis; chorismate from D-erythrose 4-phosphate and phosphoenolpyruvate: step 5/7. In terms of biological role, catalyzes the specific phosphorylation of the 3-hydroxyl group of shikimic acid using ATP as a cosubstrate. This is Shikimate kinase from Pseudomonas entomophila (strain L48).